A 121-amino-acid chain; its full sequence is Acidic phospholipase A2 PLA-1 (121 aa).

Cystine bridges form between Cys26/Cys115, Cys28/Cys44, Cys43/Cys95, Cys49/Cys121, Cys50/Cys88, Cys57/Cys81, and Cys75/Cys86. The Ca(2+) site is built by Tyr27, Gly29, and Gly31. His47 is an active-site residue. A Ca(2+)-binding site is contributed by Asp48. Asp89 is a catalytic residue.

This sequence belongs to the phospholipase A2 family. Group II subfamily. D49 sub-subfamily. Ca(2+) is required as a cofactor. As to expression, expressed by the venom gland.

The protein resides in the secreted. It carries out the reaction a 1,2-diacyl-sn-glycero-3-phosphocholine + H2O = a 1-acyl-sn-glycero-3-phosphocholine + a fatty acid + H(+). Functionally, PLA2 catalyzes the calcium-dependent hydrolysis of the 2-acyl groups in 3-sn-phosphoglycerides. This chain is Acidic phospholipase A2 PLA-1, found in Eristicophis macmahoni (Leaf-nosed viper).